Reading from the N-terminus, the 410-residue chain is 23S rRNA (uracil(747)-C(5))-methyltransferase (410 aa).

Residues Cys61, Cys67, Cys70, and Cys137 each coordinate [4Fe-4S] cluster. Residues Gln253, Tyr279, Glu300, and Asp341 each coordinate S-adenosyl-L-methionine. Cys367 functions as the Nucleophile in the catalytic mechanism.

Belongs to the class I-like SAM-binding methyltransferase superfamily. RNA M5U methyltransferase family.

It catalyses the reaction uridine(747) in 23S rRNA + S-adenosyl-L-methionine = 5-methyluridine(747) in 23S rRNA + S-adenosyl-L-homocysteine + H(+). With respect to regulation, activated by magnesium ions. Functionally, catalyzes the formation of 5-methyl-uridine at position equivalent to 747 (m5U747) in 23S rRNA (m5U859 in the P.abyssi numbering). The sequence is that of 23S rRNA (uracil(747)-C(5))-methyltransferase from Pyrococcus abyssi (strain GE5 / Orsay).